We begin with the raw amino-acid sequence, 309 residues long: MDILERTFKKLTRLKDNLQDLSQEEAYEVFRAILEGKLSDIKTTAFLTAMRIKGETSEELLGVIKAIKERMNFPQKKEDALDLGLNYDGKNRTIYILPSALWLCSRLGVEFTNHYALGAPTKEGVTLYEVVKELGVDMNVSFVDQKNYAPELYKLMPLRRELGFRSLINTVEKFLNPFQTKKIVVSIFHKPYFDKNAELLELLGIEDYTIIKGLEGGIEPLPDRPTLVKKRGKDIESIEPKSLGLEMPKDVHSENVLRDSLEINRKIIDGRERGEFFNWALYTAGVLLYAAGECESVEEGVGRVEKEST.

The protein belongs to the anthranilate phosphoribosyltransferase family.

This is an uncharacterized protein from Aquifex aeolicus (strain VF5).